A 59-amino-acid chain; its full sequence is Small ribosomal subunit protein bS21 (59 aa).

Positions 39–59 (ETPVEKYKRKQRLKNRTKRRR) are disordered. Residues 45–59 (YKRKQRLKNRTKRRR) show a composition bias toward basic residues.

The protein belongs to the bacterial ribosomal protein bS21 family.

In Prochlorococcus marinus (strain SARG / CCMP1375 / SS120), this protein is Small ribosomal subunit protein bS21.